We begin with the raw amino-acid sequence, 341 residues long: S-adenosylmethionine:tRNA ribosyltransferase-isomerase (341 aa).

This sequence belongs to the QueA family. In terms of assembly, monomer.

The protein localises to the cytoplasm. It catalyses the reaction 7-aminomethyl-7-carbaguanosine(34) in tRNA + S-adenosyl-L-methionine = epoxyqueuosine(34) in tRNA + adenine + L-methionine + 2 H(+). It participates in tRNA modification; tRNA-queuosine biosynthesis. In terms of biological role, transfers and isomerizes the ribose moiety from AdoMet to the 7-aminomethyl group of 7-deazaguanine (preQ1-tRNA) to give epoxyqueuosine (oQ-tRNA). This Citrifermentans bemidjiense (strain ATCC BAA-1014 / DSM 16622 / JCM 12645 / Bem) (Geobacter bemidjiensis) protein is S-adenosylmethionine:tRNA ribosyltransferase-isomerase.